Consider the following 255-residue polypeptide: Zinc import ATP-binding protein ZnuC 1 (255 aa).

The region spanning 7–220 is the ABC transporter domain; it reads IRLQDVTVKI…PAFINLFGTQ (214 aa). ATP is bound at residue 39-46; sequence GPNGAGKS. The tract at residues 229-255 is disordered; the sequence is HHHHDHHHHTDGTVAAGSECSHGDQHA.

The protein belongs to the ABC transporter superfamily. Zinc importer (TC 3.A.1.15.5) family. As to quaternary structure, the complex is composed of two ATP-binding proteins (ZnuC), two transmembrane proteins (ZnuB) and a solute-binding protein (ZnuA).

Its subcellular location is the cell inner membrane. The enzyme catalyses Zn(2+)(out) + ATP(in) + H2O(in) = Zn(2+)(in) + ADP(in) + phosphate(in) + H(+)(in). Functionally, part of the ABC transporter complex ZnuABC involved in zinc import. Responsible for energy coupling to the transport system. This is Zinc import ATP-binding protein ZnuC 1 from Hahella chejuensis (strain KCTC 2396).